Here is a 628-residue protein sequence, read N- to C-terminus: Nuclear receptor subfamily 4 group A member 3 (628 aa).

Residues 1-112 (MPCVQAQYSP…HHHHHHHHHH (112 aa)) form an activation function (AF)-1 domain region. Residues 1–140 (MPCVQAQYSP…PSTSMYFKQS (140 aa)) form a required for DNA-PK heterotrimer region. The segment at 1-293 (MPCVQAQYSP…NRSSSSGEGT (293 aa)) is interaction with NCOA1, NCOA2, NCOA3 and KAT2B. Disordered regions lie at residues 96-163 (HGYH…DELP) and 269-290 (ASSL…SSSG). Positions 97 to 113 (GYHHHHHHHHHHHHHHQ) are enriched in basic residues. The segment covering 142-151 (PSTPTTPGFP) has biased composition (pro residues). A compositionally biased stretch (low complexity) spans 270–289 (SSLLGESPSLPSPPNRSSSS). Positions 291–366 (EGTCAVCGDN…VGMVKEVVRT (76 aa)) form a DNA-binding region, nuclear receptor. NR C4-type zinc fingers lie at residues 294–314 (CAVC…CEGC) and 330–354 (CLAN…FQKC). The segment at 366-396 (TDSLKGRRGRLPSKPKSPLQQEPSQPSPPSP) is disordered. Residues 379 to 389 (KPKSPLQQEPS) are compositionally biased toward low complexity. The interval 381–628 (KSPLQQEPSQ…DKLFLDTLPF (248 aa)) is interaction with KAT2B. The region spanning 396 to 625 (PPICMMNALV…SVIDKLFLDT (230 aa)) is the NR LBD domain.

Belongs to the nuclear hormone receptor family. NR4 subfamily. In terms of assembly, interacts with SIX3 (via homeobox); differentially regulates the transcriptional activities of NR4A3. Interacts with NR3C1 (via nuclear receptor DNA-binding domain); the interactions represses transcription activity of NR4A3 on the POMC promoter Nur response element (NurRE). Interacts with TRIM28; the interactions potentiates NR4A3 activity on NurRE promoter. Binds DNA as a monomer and homodimer. Interacts with PARP1; activates PARP1 by improving acetylation of PARP1 and suppressing the interaction between PARP1 and SIRT1. Interacts with the constituents of DNA-PK heterotrimer PRKDC, XRCC6 and XRCC5; phosphorylates and prevents NR4A3 ubiquitinylation and degradation. Interacts with NCOA2; potentiates the activity of the NR4A3. Interacts with NCOA1, NCOA3, MED1 and KAT2B. Interacts with EP300 and NCOA2; mediates the recruitment of MED1 in the coactivator complex. Phosphorylated by PRKDC. As to expression, expressed at high levels in cultured apoptotic neuronal cells and fetal brain, and at low level in adult brain.

Its subcellular location is the nucleus. Its function is as follows. Transcriptional activator that binds to regulatory elements in promoter regions in a cell- and response element (target)-specific manner. Induces gene expression by binding as monomers to the NR4A1 response element (NBRE) 5'-AAAAGGTCA-3' site and as homodimers to the Nur response element (NurRE) site in the promoter of their regulated target genes. Plays a role in the regulation of proliferation, survival and differentiation of many different cell types and also in metabolism and inflammation. Mediates proliferation of vascular smooth muscle, myeloid progenitor cell and type B pancreatic cells; promotes mitogen-induced vascular smooth muscle cell proliferation through transactivation of SKP2 promoter by binding a NBRE site. Upon PDGF stimulation, stimulates vascular smooth muscle cell proliferation by regulating CCND1 and CCND2 expression. In islets, induces type B pancreatic cell proliferation through up-regulation of genes that activate cell cycle, as well as genes that cause degradation of the CDKN1A. Negatively regulates myeloid progenitor cell proliferation by repressing RUNX1 in a NBRE site-independent manner. During inner ear, plays a role as a key mediator of the proliferative growth phase of semicircular canal development. Also mediates survival of neuron and smooth muscle cells; mediates CREB-induced neuronal survival, and during hippocampus development, plays a critical role in pyramidal cell survival and axonal guidance. Is required for S phase entry of the cell cycle and survival of smooth muscle cells by inducing CCND1, resulting in RB1 phosphorylation. Binds to NBRE motif in CCND1 promoter, resulting in the activation of the promoter and CCND1 transcription. Also plays a role in inflammation; Upon TNF stimulation, mediates monocyte adhesion by inducing the expression of VCAM1 and ICAM1 by binding to the NBRE consensus site. In mast cells activated by Fc-epsilon receptor cross-linking, promotes the synthesis and release of cytokines but impairs events leading to degranulation. Also plays a role in metabolism; by modulating feeding behavior; and by playing a role in energy balance by inhibiting the glucocorticoid-induced orexigenic neuropeptides AGRP expression, at least in part by forming a complex with activated NR3C1 on the AGRP-glucocorticoid response element (GRE), and thus weakening the DNA binding activity of NR3C1. Upon catecholamines stimulation, regulates gene expression that controls oxidative metabolism in skeletal muscle. Plays a role in glucose transport by regulating translocation of the SLC2A4 glucose transporter to the cell surface. Finally, during gastrulation plays a crucial role in the formation of anterior mesoderm by controlling cell migration. Also participates in cardiac hypertrophy by activating PARP1. This chain is Nuclear receptor subfamily 4 group A member 3 (Nr4a3), found in Rattus norvegicus (Rat).